Reading from the N-terminus, the 455-residue chain is Ribulose bisphosphate carboxylase large chain (455 aa).

Lysine 5 carries the post-translational modification N6,N6,N6-trimethyllysine. Substrate contacts are provided by asparagine 114 and threonine 164. Lysine 166 serves as the catalytic Proton acceptor. Lysine 168 is a substrate binding site. Mg(2+) contacts are provided by lysine 192, aspartate 194, and glutamate 195. Lysine 192 carries the N6-carboxylysine modification. Catalysis depends on histidine 285, which acts as the Proton acceptor. Arginine 286, histidine 318, and serine 370 together coordinate substrate.

Belongs to the RuBisCO large chain family. Type I subfamily. Heterohexadecamer of 8 large chains and 8 small chains; disulfide-linked. The disulfide link is formed within the large subunit homodimers. Requires Mg(2+) as cofactor. Post-translationally, the disulfide bond which can form in the large chain dimeric partners within the hexadecamer appears to be associated with oxidative stress and protein turnover.

The protein localises to the plastid. It localises to the chloroplast. It carries out the reaction 2 (2R)-3-phosphoglycerate + 2 H(+) = D-ribulose 1,5-bisphosphate + CO2 + H2O. The catalysed reaction is D-ribulose 1,5-bisphosphate + O2 = 2-phosphoglycolate + (2R)-3-phosphoglycerate + 2 H(+). Functionally, ruBisCO catalyzes two reactions: the carboxylation of D-ribulose 1,5-bisphosphate, the primary event in carbon dioxide fixation, as well as the oxidative fragmentation of the pentose substrate in the photorespiration process. Both reactions occur simultaneously and in competition at the same active site. This is Ribulose bisphosphate carboxylase large chain from Lupinus latifolius (Broad-leaved lupine).